We begin with the raw amino-acid sequence, 417 residues long: Inhibitor of growth protein 3 (417 aa).

Disordered regions lie at residues 126 to 165 (LDTP…SEKK), 177 to 198 (SDAS…STNN), and 284 to 320 (QTLT…SSSL). Over residues 136–152 (HHVHSHSLGEKRKHNPS) the composition is skewed to basic residues. Over residues 156-165 (STTDHVSEKK) the composition is skewed to basic and acidic residues. Residues 177-187 (SDASKENTAGC) show a composition bias toward polar residues. Composition is skewed to low complexity over residues 189 to 198 (NNLSSSSTNN), 284 to 294 (QTLTSSATTDS), and 303 to 320 (NNKS…SSSL). The PHD-type zinc finger occupies 359-408 (PRYCICNQVSYGEMVGCDNQDCPIEWFHYGCVGLSEAPKGKWYCPQCTAA). Positions 362, 364, 375, 380, 386, 389, 402, and 405 each coordinate Zn(2+).

Belongs to the ING family. As to quaternary structure, interacts with H3K4me3 and to a lesser extent with H3K4me2. Component of the NuA4 histone acetyltransferase complex.

The protein resides in the nucleus. Functionally, component of the NuA4 histone acetyltransferase (HAT) complex which is involved in transcriptional activation of select genes principally by acetylation of nucleosomal histone H4 and H2A. This modification may both alter nucleosome - DNA interactions and promote interaction of the modified histones with other proteins which positively regulate transcription. NuA4 may also play a direct role in DNA repair when directly recruited to sites of DNA damage. The sequence is that of Inhibitor of growth protein 3 (ing3) from Xenopus tropicalis (Western clawed frog).